The primary structure comprises 319 residues: Lipopolysaccharide heptosyltransferase 1 (319 aa).

ADP-L-glycero-beta-D-manno-heptose is bound by residues Thr187, Thr188, Lys192, Glu222, Met242, Asp261, Thr262, Gly263, and His266.

This sequence belongs to the glycosyltransferase 9 family.

The protein resides in the cell inner membrane. It carries out the reaction an alpha-Kdo-(2-&gt;4)-alpha-Kdo-(2-&gt;6)-lipid A + ADP-L-glycero-beta-D-manno-heptose = an L-alpha-D-Hep-(1-&gt;5)-[alpha-Kdo-(2-&gt;4)]-alpha-Kdo-(2-&gt;6)-lipid A + ADP + H(+). It catalyses the reaction alpha-Kdo-(2-&gt;4)-alpha-Kdo-(2-&gt;6)-lipid A (E. coli) + ADP-L-glycero-beta-D-manno-heptose = L-alpha-D-Hep-(1-&gt;5)-[alpha-Kdo-(2-&gt;4)]-alpha-Kdo-(2-&gt;6)-lipid A (E. coli) + ADP + H(+). It participates in bacterial outer membrane biogenesis; LPS core biosynthesis. Its function is as follows. Glycosyltransferase involved in the biosynthesis of the core oligosaccharide region of lipopolysaccharide (LPS). Catalyzes the addition of the first heptose unit to one 3-deoxy-D-manno-octulosonic acid (Kdo) residue of the Kdo2-lipid A module. The analog ADP-mannose can serve as an alternative donor in place of ADP-L-glycero-D-manno-heptose for the glycosylation of Kdo2-lipid A. Displays no activity with ADP-glucose, GDP-mannose, UDP-glucose or UDP-galactose. The sequence is that of Lipopolysaccharide heptosyltransferase 1 from Escherichia coli (strain K12).